A 518-amino-acid polypeptide reads, in one-letter code: MATLIRSKLSNVATSVSNKSQAKVSGMFARMGFQAATDEEALGFAHCDDLDTEHRQGLQMDILKTEVPTGDAPPEGDIHYQRDGTGLPPSASKDEGLCSELSSSEKPQITAWEAGWNVTNAIQGMFVLGLPYAILHGGYLGLFLIIFAAVVCCYTGKILIACLYEENEDGETVRVRDSYVDIANACCAPRFPKLGGRVVNVAQIIELVMTCILYVVVSGNLMYNSFPNLPISQKSWSIMATAVLLPCAFLKNLKAVSKFSLLCTVAHFVINILVIAYCLSRARDWAWDKVKFYIDVKKFPISIGIIVFSYTSQIFLPSLEGNMQSPREFHCMMNWTHIAACILKGLFALVAYLTWADETKEVITDNLPSTIRAVVNLFLVSKALLSYPLPFFAAVEVLEKSLFQEGARAFFPNCYGGDGRLKSWGLTLRCALVVFTLLMAIYVPHFALLMGLTGSLTGAGLCFLLPSLFHLKLMWRQLLWHQVFFDVSIFVIGSICSVSGFVHSLEGLIEAYAYNIED.

Residues 1–125 (MATLIRSKLS…WNVTNAIQGM (125 aa)) lie on the Cytoplasmic side of the membrane. A helical membrane pass occupies residues 126–146 (FVLGLPYAILHGGYLGLFLII). The Lumenal, vesicle portion of the chain corresponds to 147–197 (FAAVVCCYTGKILIACLYEENEDGETVRVRDSYVDIANACCAPRFPKLGGR). Residues 198-218 (VVNVAQIIELVMTCILYVVVS) form a helical membrane-spanning segment. Over 219 to 258 (GNLMYNSFPNLPISQKSWSIMATAVLLPCAFLKNLKAVSK) the chain is Cytoplasmic. The helical transmembrane segment at 259 to 279 (FSLLCTVAHFVINILVIAYCL) threads the bilayer. The Lumenal, vesicle segment spans residues 280 to 298 (SRARDWAWDKVKFYIDVKK). The chain crosses the membrane as a helical span at residues 299-319 (FPISIGIIVFSYTSQIFLPSL). Residues 320–334 (EGNMQSPREFHCMMN) lie on the Cytoplasmic side of the membrane. A helical transmembrane segment spans residues 335–355 (WTHIAACILKGLFALVAYLTW). Residues 356–376 (ADETKEVITDNLPSTIRAVVN) lie on the Lumenal, vesicle side of the membrane. The helical transmembrane segment at 377–397 (LFLVSKALLSYPLPFFAAVEV) threads the bilayer. Topologically, residues 398-431 (LEKSLFQEGARAFFPNCYGGDGRLKSWGLTLRCA) are cytoplasmic. The chain crosses the membrane as a helical span at residues 432–452 (LVVFTLLMAIYVPHFALLMGL). Over 453–454 (TG) the chain is Lumenal, vesicle. Residues 455-475 (SLTGAGLCFLLPSLFHLKLMW) traverse the membrane as a helical segment. At 476–482 (RQLLWHQ) the chain is on the cytoplasmic side. The chain crosses the membrane as a helical span at residues 483-503 (VFFDVSIFVIGSICSVSGFVH). The Lumenal, vesicle segment spans residues 504 to 518 (SLEGLIEAYAYNIED).

The protein belongs to the amino acid/polyamine transporter 2 family. Initially expressed in late neurula stages in the anterior spinal cord. By early tailbud stages, expression extends posteriorly along the entire developing spinal cord and appears in the hindbrain. In late tailbud embryos, expressed in the forebrain, midbrain, hindbrain, spinal cord and retina. In swimming tadpoles, expressed in an extended and more intense pattern including interneurons.

The protein resides in the cytoplasmic vesicle membrane. It is found in the presynapse. The enzyme catalyses 4-aminobutanoate(out) + n H(+)(in) = 4-aminobutanoate(in) + n H(+)(out). It carries out the reaction glycine(out) + n H(+)(in) = glycine(in) + n H(+)(out). It catalyses the reaction beta-alanine(out) + n H(+)(in) = beta-alanine(in) + n H(+)(out). Its function is as follows. Antiporter that exchanges vesicular protons for cytosolic 4-aminobutanoate or to a lesser extend glycine, thus allowing their secretion from nerve terminals. The transport is equally dependent on the chemical and electrical components of the proton gradient. May also transport beta-alanine. Acidification of GABAergic synaptic vesicles is a prerequisite for 4-aminobutanoate uptake. This Xenopus laevis (African clawed frog) protein is Vesicular inhibitory amino acid transporter.